A 188-amino-acid chain; its full sequence is Holliday junction branch migration complex subunit RuvA (188 aa).

The domain I stretch occupies residues 1 to 64; it reads MIAGISGRVL…QDGITLYGFS (64 aa). The interval 65-143 is domain II; it reads NEMKKELFLS…SAGIKDMRIY (79 aa). Tyrosine 143 is a region of interest (flexible linker). The segment at 143–186 is domain III; that stretch reads YHESLEALVSLGYPEKQAREAVKQVYREGMKTSELIKEALKFLS.

Belongs to the RuvA family. In terms of assembly, homotetramer. Forms an RuvA(8)-RuvB(12)-Holliday junction (HJ) complex. HJ DNA is sandwiched between 2 RuvA tetramers; dsDNA enters through RuvA and exits via RuvB. An RuvB hexamer assembles on each DNA strand where it exits the tetramer. Each RuvB hexamer is contacted by two RuvA subunits (via domain III) on 2 adjacent RuvB subunits; this complex drives branch migration. In the full resolvosome a probable DNA-RuvA(4)-RuvB(12)-RuvC(2) complex forms which resolves the HJ.

Its subcellular location is the cytoplasm. The RuvA-RuvB-RuvC complex processes Holliday junction (HJ) DNA during genetic recombination and DNA repair, while the RuvA-RuvB complex plays an important role in the rescue of blocked DNA replication forks via replication fork reversal (RFR). RuvA specifically binds to HJ cruciform DNA, conferring on it an open structure. The RuvB hexamer acts as an ATP-dependent pump, pulling dsDNA into and through the RuvAB complex. HJ branch migration allows RuvC to scan DNA until it finds its consensus sequence, where it cleaves and resolves the cruciform DNA. Promotes Holliday junction (HJ) branch migration in conjunction with RuvB. This Thermotoga maritima (strain ATCC 43589 / DSM 3109 / JCM 10099 / NBRC 100826 / MSB8) protein is Holliday junction branch migration complex subunit RuvA.